The primary structure comprises 231 residues: Large ribosomal subunit protein uL1 (231 aa).

Belongs to the universal ribosomal protein uL1 family. In terms of assembly, part of the 50S ribosomal subunit.

Binds directly to 23S rRNA. The L1 stalk is quite mobile in the ribosome, and is involved in E site tRNA release. In terms of biological role, protein L1 is also a translational repressor protein, it controls the translation of the L11 operon by binding to its mRNA. The chain is Large ribosomal subunit protein uL1 from Alcanivorax borkumensis (strain ATCC 700651 / DSM 11573 / NCIMB 13689 / SK2).